Here is a 207-residue protein sequence, read N- to C-terminus: Small ribosomal subunit protein uS4 (207 aa).

A compositionally biased stretch (basic and acidic residues) spans 29–38 (QDKAKFDSKP). Residues 29 to 54 (QDKAKFDSKPGQHGRTSGQRTSDYGL) form a disordered region. Positions 42–52 (GRTSGQRTSDY) are enriched in polar residues. An S4 RNA-binding domain is found at 97–160 (SRLDNVVYRM…KKQTRIAEAL (64 aa)).

The protein belongs to the universal ribosomal protein uS4 family. In terms of assembly, part of the 30S ribosomal subunit. Contacts protein S5. The interaction surface between S4 and S5 is involved in control of translational fidelity.

In terms of biological role, one of the primary rRNA binding proteins, it binds directly to 16S rRNA where it nucleates assembly of the body of the 30S subunit. With S5 and S12 plays an important role in translational accuracy. This chain is Small ribosomal subunit protein uS4, found in Variovorax paradoxus (strain S110).